Consider the following 35-residue polypeptide: Leukocyte cysteine proteinase inhibitor 2 (35 aa).

The disordered stretch occupies residues 1-35; that stretch reads LAGGLTEPRPADTEIQEIANKVKPQLEEKTNKKYD. The segment covering 24 to 35 has biased composition (basic and acidic residues); sequence PQLEEKTNKKYD.

Belongs to the cystatin family.

It is found in the cytoplasm. In terms of biological role, potent inhibitor of cathepsins L and S, and papain. The chain is Leukocyte cysteine proteinase inhibitor 2 from Sus scrofa (Pig).